The primary structure comprises 872 residues: FHIP family protein CBG19667 (872 aa).

The segment at 800-841 (SRSSPRSADEHDSTLFYGRSTIPPPGRKPLLREPSHQETLDD) is disordered. Positions 829 to 841 (LLREPSHQETLDD) are enriched in basic and acidic residues.

The protein belongs to the FHIP family.

In Caenorhabditis briggsae, this protein is FHIP family protein CBG19667.